The sequence spans 491 residues: Glutamate--tRNA ligase (491 aa).

Positions 13–23 match the 'HIGH' region motif; it reads PSPTGFLHIGN. The Zn(2+) site is built by cysteine 110, cysteine 112, cysteine 137, and histidine 139. The 'KMSKS' region signature appears at 254–258; it reads KLSKR. Residue lysine 257 coordinates ATP.

The protein belongs to the class-I aminoacyl-tRNA synthetase family. Glutamate--tRNA ligase type 1 subfamily. Monomer. Zn(2+) is required as a cofactor.

Its subcellular location is the cytoplasm. It catalyses the reaction tRNA(Glu) + L-glutamate + ATP = L-glutamyl-tRNA(Glu) + AMP + diphosphate. In terms of biological role, catalyzes the attachment of glutamate to tRNA(Glu) in a two-step reaction: glutamate is first activated by ATP to form Glu-AMP and then transferred to the acceptor end of tRNA(Glu). This is Glutamate--tRNA ligase from Listeria monocytogenes serotype 4b (strain F2365).